The primary structure comprises 702 residues: Polyribonucleotide nucleotidyltransferase (702 aa).

Positions 491 and 497 each coordinate Mg(2+). The KH domain occupies 558-618 (PKMKTFMIPV…TAIEKAYQLI (61 aa)). The S1 motif domain maps to 628-696 (GEKIIGPVVK…GKGKIKLQLI (69 aa)).

Belongs to the polyribonucleotide nucleotidyltransferase family. Mg(2+) serves as cofactor.

The protein resides in the cytoplasm. The catalysed reaction is RNA(n+1) + phosphate = RNA(n) + a ribonucleoside 5'-diphosphate. Its function is as follows. Involved in mRNA degradation. Catalyzes the phosphorolysis of single-stranded polyribonucleotides processively in the 3'- to 5'-direction. This chain is Polyribonucleotide nucleotidyltransferase, found in Spiroplasma citri.